The primary structure comprises 336 residues: Nuclear envelope-associated protein 3 (336 aa).

Coiled-coil stretches lie at residues 14–87 (LKDL…IRAS) and 128–261 (VLSK…LKKK). A Bipartite nuclear localization signal motif is present at residues 240–261 (KTKELEDQVENQRRIDQELKKK). A helical transmembrane segment spans residues 313 to 330 (LWDKSGFKIVVSMSMLIL).

Forms homomers and heteromers with NEAP1 and NEAP2. Interacts with SUN1 and SUN2.

Its subcellular location is the nucleus inner membrane. The protein localises to the nucleus. The protein resides in the nucleoplasm. This chain is Nuclear envelope-associated protein 3, found in Arabidopsis thaliana (Mouse-ear cress).